The following is a 176-amino-acid chain: NAD(P)H-quinone oxidoreductase subunit 6, chloroplastic (176 aa).

5 helical membrane-spanning segments follow: residues 10-30 (FLLV…VLFT), 33-53 (IFSA…YILA), 63-83 (LLIY…FMSG), 105-125 (ISLF…GIIW), and 152-172 (FFLP…GAIA).

The protein belongs to the complex I subunit 6 family. In terms of assembly, NDH is composed of at least 16 different subunits, 5 of which are encoded in the nucleus.

The protein resides in the plastid. It is found in the chloroplast thylakoid membrane. The enzyme catalyses a plastoquinone + NADH + (n+1) H(+)(in) = a plastoquinol + NAD(+) + n H(+)(out). It catalyses the reaction a plastoquinone + NADPH + (n+1) H(+)(in) = a plastoquinol + NADP(+) + n H(+)(out). Its function is as follows. NDH shuttles electrons from NAD(P)H:plastoquinone, via FMN and iron-sulfur (Fe-S) centers, to quinones in the photosynthetic chain and possibly in a chloroplast respiratory chain. The immediate electron acceptor for the enzyme in this species is believed to be plastoquinone. Couples the redox reaction to proton translocation, and thus conserves the redox energy in a proton gradient. This chain is NAD(P)H-quinone oxidoreductase subunit 6, chloroplastic (ndhG), found in Spinacia oleracea (Spinach).